The sequence spans 242 residues: Methylthioribulose-1-phosphate dehydratase (242 aa).

A disordered region spans residues 1-23 (MTDQREEPQGSNDHLVRSSDPEH). Cysteine 102 provides a ligand contact to substrate. 2 residues coordinate Zn(2+): histidine 119 and histidine 121. Residue glutamate 148 is the Proton donor/acceptor of the active site. Residue histidine 204 participates in Zn(2+) binding.

The protein belongs to the aldolase class II family. MtnB subfamily. The cofactor is Zn(2+).

It is found in the cytoplasm. The catalysed reaction is 5-(methylsulfanyl)-D-ribulose 1-phosphate = 5-methylsulfanyl-2,3-dioxopentyl phosphate + H2O. The protein operates within amino-acid biosynthesis; L-methionine biosynthesis via salvage pathway; L-methionine from S-methyl-5-thio-alpha-D-ribose 1-phosphate: step 2/6. In terms of biological role, catalyzes the dehydration of methylthioribulose-1-phosphate (MTRu-1-P) into 2,3-diketo-5-methylthiopentyl-1-phosphate (DK-MTP-1-P). The chain is Methylthioribulose-1-phosphate dehydratase from Uncinocarpus reesii (strain UAMH 1704).